The chain runs to 408 residues: Cobalt-precorrin-5B C(1)-methyltransferase (408 aa).

Belongs to the CbiD family.

It carries out the reaction Co-precorrin-5B + S-adenosyl-L-methionine = Co-precorrin-6A + S-adenosyl-L-homocysteine. It participates in cofactor biosynthesis; adenosylcobalamin biosynthesis; cob(II)yrinate a,c-diamide from sirohydrochlorin (anaerobic route): step 6/10. Functionally, catalyzes the methylation of C-1 in cobalt-precorrin-5B to form cobalt-precorrin-6A. In Clostridioides difficile (strain 630) (Peptoclostridium difficile), this protein is Cobalt-precorrin-5B C(1)-methyltransferase.